The sequence spans 281 residues: Pantothenate synthetase (281 aa).

30 to 37 lines the ATP pocket; sequence MGYLHEGH. Residue histidine 37 is the Proton donor of the active site. Glutamine 61 serves as a coordination point for (R)-pantoate. Beta-alanine is bound at residue glutamine 61. Position 147–150 (147–150) interacts with ATP; that stretch reads GEKD. A (R)-pantoate-binding site is contributed by glutamine 153. Residues isoleucine 176 and 184–187 contribute to the ATP site; that span reads KSSR.

This sequence belongs to the pantothenate synthetase family. As to quaternary structure, homodimer.

The protein resides in the cytoplasm. The enzyme catalyses (R)-pantoate + beta-alanine + ATP = (R)-pantothenate + AMP + diphosphate + H(+). The protein operates within cofactor biosynthesis; (R)-pantothenate biosynthesis; (R)-pantothenate from (R)-pantoate and beta-alanine: step 1/1. Functionally, catalyzes the condensation of pantoate with beta-alanine in an ATP-dependent reaction via a pantoyl-adenylate intermediate. This Clostridium botulinum (strain ATCC 19397 / Type A) protein is Pantothenate synthetase.